Consider the following 370-residue polypeptide: 3-isopropylmalate dehydrogenase (370 aa).

An NAD(+)-binding site is contributed by 77–90 (GAKWDGVPYEARPE). The substrate site is built by Arg-97, Arg-107, Arg-135, and Asp-226. The Mg(2+) site is built by Asp-226, Asp-250, and Asp-254. Position 290 to 302 (290 to 302 (GSAPDIAGKGLAN)) interacts with NAD(+).

It belongs to the isocitrate and isopropylmalate dehydrogenases family. LeuB type 1 subfamily. In terms of assembly, homodimer. Mg(2+) is required as a cofactor. Requires Mn(2+) as cofactor.

It is found in the cytoplasm. The enzyme catalyses (2R,3S)-3-isopropylmalate + NAD(+) = 4-methyl-2-oxopentanoate + CO2 + NADH. It participates in amino-acid biosynthesis; L-leucine biosynthesis; L-leucine from 3-methyl-2-oxobutanoate: step 3/4. Catalyzes the oxidation of 3-carboxy-2-hydroxy-4-methylpentanoate (3-isopropylmalate) to 3-carboxy-4-methyl-2-oxopentanoate. The product decarboxylates to 4-methyl-2 oxopentanoate. This chain is 3-isopropylmalate dehydrogenase, found in Rhodopseudomonas palustris (strain BisB18).